The sequence spans 295 residues: Pyridoxal 5'-phosphate synthase subunit PdxS (295 aa).

Residue Asp25 coordinates D-ribose 5-phosphate. The active-site Schiff-base intermediate with D-ribose 5-phosphate is the Lys82. Gly154 provides a ligand contact to D-ribose 5-phosphate. Arg166 contacts D-glyceraldehyde 3-phosphate. D-ribose 5-phosphate contacts are provided by residues Gly215 and 236–237; that span reads GS.

The protein belongs to the PdxS/SNZ family. As to quaternary structure, in the presence of PdxT, forms a dodecamer of heterodimers.

It carries out the reaction aldehydo-D-ribose 5-phosphate + D-glyceraldehyde 3-phosphate + L-glutamine = pyridoxal 5'-phosphate + L-glutamate + phosphate + 3 H2O + H(+). It participates in cofactor biosynthesis; pyridoxal 5'-phosphate biosynthesis. Functionally, catalyzes the formation of pyridoxal 5'-phosphate from ribose 5-phosphate (RBP), glyceraldehyde 3-phosphate (G3P) and ammonia. The ammonia is provided by the PdxT subunit. Can also use ribulose 5-phosphate and dihydroxyacetone phosphate as substrates, resulting from enzyme-catalyzed isomerization of RBP and G3P, respectively. The polypeptide is Pyridoxal 5'-phosphate synthase subunit PdxS (Staphylococcus carnosus (strain TM300)).